A 460-amino-acid polypeptide reads, in one-letter code: Mitochondrial distribution and morphology protein 10 (460 aa).

Belongs to the MDM10 family. As to quaternary structure, component of the ER-mitochondria encounter structure (ERMES) or MDM complex, composed of MMM1, MDM10, MDM12 and MDM34. Associates with the mitochondrial outer membrane sorting assembly machinery SAM(core) complex.

Its subcellular location is the mitochondrion outer membrane. Component of the ERMES/MDM complex, which serves as a molecular tether to connect the endoplasmic reticulum and mitochondria. Components of this complex are involved in the control of mitochondrial shape and protein biogenesis and may function in phospholipid exchange. MDM10 is involved in the late assembly steps of the general translocase of the mitochondrial outer membrane (TOM complex). Functions in the TOM40-specific route of the assembly of outer membrane beta-barrel proteins, including the association of TOM40 with the receptor TOM22 and small TOM proteins. Can associate with the SAM(core) complex as well as the MDM12-MMM1 complex, both involved in late steps of the major beta-barrel assembly pathway, that is responsible for biogenesis of all outer membrane beta-barrel proteins. May act as a switch that shuttles between both complexes and channels precursor proteins into the TOM40-specific pathway. Plays a role in mitochondrial morphology and in the inheritance of mitochondria. This Candida glabrata (strain ATCC 2001 / BCRC 20586 / JCM 3761 / NBRC 0622 / NRRL Y-65 / CBS 138) (Yeast) protein is Mitochondrial distribution and morphology protein 10.